A 407-amino-acid chain; its full sequence is [Pyruvate dehydrogenase (acetyl-transferring)] kinase isozyme 2, mitochondrial (407 aa).

The Histidine kinase domain maps to 135–364; it reads LEYKDTYGDD…DAVIYLKALS (230 aa). Phosphotyrosine is present on residues Tyr-215 and Tyr-216. Residues 251 to 258, Asp-290, 309 to 310, and 325 to 330 each bind ATP; these read ELFKNAMR, ST, and GFGYGL. The residue at position 376 (Lys-376) is an N6-succinyllysine.

The protein belongs to the PDK/BCKDK protein kinase family. Homodimer, and heterodimer with PDK1. Interacts with the pyruvate dehydrogenase complex subunit DLAT, and is part of the multimeric pyruvate dehydrogenase complex that contains multiple copies of pyruvate dehydrogenase (E1), dihydrolipoamide acetyltransferase (DLAT, E2) and lipoamide dehydrogenase (DLD, E3). As to expression, detected in heart (at protein level). Highest level of expression in heart and skeletal muscle and the lowest in spleen and lung. Liver, kidney, brain and testis levels are intermediate.

The protein resides in the mitochondrion matrix. It catalyses the reaction L-seryl-[pyruvate dehydrogenase E1 alpha subunit] + ATP = O-phospho-L-seryl-[pyruvate dehydrogenase E1 alpha subunit] + ADP + H(+). With respect to regulation, activity increases in response to increased acetyl-CoA and NADH levels and upon binding to the pyruvate dehydrogenase subunit DLAT. Inhibited by ADP and pyruvate; these compounds interfere with DLAT binding and thereby inhibit kinase activity. Inhibited by dichloroacetate. Inhibited by AZD7545; this compound interferes with DLAT binding and thereby inhibits kinase activity. Reactive oxygen species cause the formation of disulfide bonds, and thereby inhibit the enzyme. In terms of biological role, kinase that plays a key role in the regulation of glucose and fatty acid metabolism and homeostasis via phosphorylation of the pyruvate dehydrogenase subunits PDHA1 and PDHA2. This inhibits pyruvate dehydrogenase activity, and thereby regulates metabolite flux through the tricarboxylic acid cycle, down-regulates aerobic respiration and inhibits the formation of acetyl-coenzyme A from pyruvate. Inhibition of pyruvate dehydrogenase decreases glucose utilization and increases fat metabolism. Mediates cellular responses to insulin. Plays an important role in maintaining normal blood glucose levels and in metabolic adaptation to nutrient availability. Via its regulation of pyruvate dehydrogenase activity, plays an important role in maintaining normal blood pH and in preventing the accumulation of ketone bodies under starvation. Plays a role in the regulation of cell proliferation and in resistance to apoptosis under oxidative stress. Plays a role in p53/TP53-mediated apoptosis. The polypeptide is [Pyruvate dehydrogenase (acetyl-transferring)] kinase isozyme 2, mitochondrial (Pdk2) (Rattus norvegicus (Rat)).